The sequence spans 840 residues: Heat shock 70 kDa protein 4 (840 aa).

N6-acetyllysine is present on lysine 53. Serine 76 is subject to Phosphoserine. Phosphotyrosine is present on residues tyrosine 89 and tyrosine 336. A phosphoserine mark is found at serine 393 and serine 415. Lysine 430 carries the post-translational modification N6-acetyllysine. A disordered region spans residues 500-575; it reads VHKSEESEEP…QAKKAKVKTS (76 aa). Over residues 514 to 533 the composition is skewed to basic and acidic residues; it reads QNAKEEEKMQVDQEEPHTEE. Phosphothreonine is present on threonine 538. Serine 546 carries the phosphoserine modification. At tyrosine 660 the chain carries Phosphotyrosine. Residue serine 756 is modified to Phosphoserine. The residue at position 773 (lysine 773) is an N6-methyllysine. The segment at 781 to 840 is disordered; that stretch reads PIISKPKPKVEPPKEEPKHAEQNGPVDGQGDNPGTQAAEHGADTAVPSDGDKKLPEMDID. Basic and acidic residues-rich tracts occupy residues 788–801 and 829–840; these read PKVE…KHAE and DGDKKLPEMDID.

This sequence belongs to the heat shock protein 70 family. In terms of assembly, interacts with TJP1/ZO-1. Ubiquitous. Highly expressed in testis.

The protein resides in the cytoplasm. This chain is Heat shock 70 kDa protein 4 (Hspa4), found in Rattus norvegicus (Rat).